A 366-amino-acid chain; its full sequence is MERITVNLAERSYPISIGAGLFEDPAYLSQVLSNKNTNQKVVVISNVTVAPLYADKILHQLKQLGCDASLLELPDGEQYKNLDVFNQVMNFLLEGSYARDVVIIALGGGVIGDLVGFASACYQRGVDFIQIPTTLLSQVDSSVGGKTAVNHPLGKNMIGAFYQPKAVIIDTNCLSTLPEREFAAGIAEVIKYGIIYDGAFFDWLEENLDRLYTLDEDALTYAIARCCQIKAEVVAQDEKESGIRALLNLGHTFGHAIEAELGYGNWLHGEAVSSGTVMAAKTSLLRGLISEEQFERIVALLRRAKLPVHTPDSMSFDDFIKHMMRDKKVLSGQLRLVLPTGIGSAEVIADTSQEVIQQAIDFGRNI.

NAD(+) contacts are provided by residues 75 to 80, 109 to 113, 133 to 134, Lys146, Lys155, and 173 to 176; these read DGEQYK, GVIGD, TT, and CLST. 3 residues coordinate Zn(2+): Glu188, His251, and His268.

It belongs to the sugar phosphate cyclases superfamily. Dehydroquinate synthase family. NAD(+) is required as a cofactor. Co(2+) serves as cofactor. The cofactor is Zn(2+).

The protein resides in the cytoplasm. It catalyses the reaction 7-phospho-2-dehydro-3-deoxy-D-arabino-heptonate = 3-dehydroquinate + phosphate. It participates in metabolic intermediate biosynthesis; chorismate biosynthesis; chorismate from D-erythrose 4-phosphate and phosphoenolpyruvate: step 2/7. Its function is as follows. Catalyzes the conversion of 3-deoxy-D-arabino-heptulosonate 7-phosphate (DAHP) to dehydroquinate (DHQ). This chain is 3-dehydroquinate synthase, found in Vibrio parahaemolyticus serotype O3:K6 (strain RIMD 2210633).